Consider the following 227-residue polypeptide: 27 kDa glycoprotein (227 aa).

The first 17 residues, 1–17 (MMWKTVLITIFAAGVLA), serve as a signal peptide directing secretion. Residues asparagine 118 and asparagine 173 are each glycosylated (N-linked (GlcNAc...) asparagine).

It belongs to the UPF0408 family. In terms of tissue distribution, expressed in the subesophageal body, fat bodies, hemocytes, midgut and Malpighian tubules. Not expressed in silk glands.

The protein localises to the secreted. This chain is 27 kDa glycoprotein, found in Bombyx mori (Silk moth).